The chain runs to 365 residues: Chloroplast protein FOR GROWTH AND FERTILITY 1 (365 aa).

Disordered regions lie at residues 1–30 (MERL…LPRL) and 62–90 (YTPI…PGFL). Residues 1–79 (MERLLQPSSS…TNNSFNGSPK (79 aa)) constitute a chloroplast transit peptide. 2 stretches are compositionally biased toward low complexity: residues 7-24 (PSSS…SRTS) and 62-77 (YTPI…FNGS). 7 helical membrane-spanning segments follow: residues 109–129 (VILI…PPAF), 139–159 (GWLT…LSGP), 182–202 (ALWG…FLLL), 218–238 (IVGL…SEIP), 274–294 (GVVH…LALP), 301–321 (AFLI…TAFI), and 345–365 (LVAI…FSLY).

In terms of tissue distribution, mostly expressed in leaves and flowers, to a lower extent, in stems, roots, floral bud, inflorescence and siliques, and, barely, in seedlings.

Its subcellular location is the plastid. It is found in the chloroplast membrane. The protein localises to the plastid membrane. Functionally, together with CGF2, essential protein which supports female gametogenesis and embryogenesis, probably by securing local energy supply. The sequence is that of Chloroplast protein FOR GROWTH AND FERTILITY 1 from Arabidopsis thaliana (Mouse-ear cress).